A 207-amino-acid chain; its full sequence is MVQGTLYIVSAPSGAGKSSLIQALLKTQPLYDTQVSISHTTRAKRPGENHGEHYFFVSEKEFCQMIDDDAFLEHAKVFENYYGTSRLAIEQVLATGVDVFLDIDWQGAQQIRAKMPTARSIFILPPSKTELDRRLRGRGQDSEEVIAKRMEQAVAEMAHYAEYDYLIVNDDFNLALSDLKTIIRAERLRLGRQKQRHDALISKLLAD.

The Guanylate kinase-like domain maps to 4 to 184 (GTLYIVSAPS…ALSDLKTIIR (181 aa)). Residue 11–18 (APSGAGKS) participates in ATP binding.

It belongs to the guanylate kinase family.

The protein resides in the cytoplasm. The enzyme catalyses GMP + ATP = GDP + ADP. Essential for recycling GMP and indirectly, cGMP. The sequence is that of Guanylate kinase from Yersinia pestis bv. Antiqua (strain Antiqua).